The sequence spans 646 residues: Phosphomethylpyrimidine synthase (646 aa).

Residues 1-13 (MNIRSNPDTTRPA) show a composition bias toward polar residues. Residues 1–30 (MNIRSNPDTTRPAVTTGALPSSRKMFSAPD) form a disordered region. Substrate-binding positions include Asn221, Met250, Tyr279, His315, 335–337 (SRG), 376–379 (DGLR), and Glu415. His419 contacts Zn(2+). Substrate is bound at residue Tyr442. Residue His483 coordinates Zn(2+). [4Fe-4S] cluster contacts are provided by Cys563, Cys566, and Cys571.

This sequence belongs to the ThiC family. Homodimer. [4Fe-4S] cluster serves as cofactor.

It carries out the reaction 5-amino-1-(5-phospho-beta-D-ribosyl)imidazole + S-adenosyl-L-methionine = 4-amino-2-methyl-5-(phosphooxymethyl)pyrimidine + CO + 5'-deoxyadenosine + formate + L-methionine + 3 H(+). The protein operates within cofactor biosynthesis; thiamine diphosphate biosynthesis. In terms of biological role, catalyzes the synthesis of the hydroxymethylpyrimidine phosphate (HMP-P) moiety of thiamine from aminoimidazole ribotide (AIR) in a radical S-adenosyl-L-methionine (SAM)-dependent reaction. The chain is Phosphomethylpyrimidine synthase from Nitrobacter winogradskyi (strain ATCC 25391 / DSM 10237 / CIP 104748 / NCIMB 11846 / Nb-255).